We begin with the raw amino-acid sequence, 327 residues long: Cyclic AMP-responsive element-binding protein 1 (327 aa).

Disordered regions lie at residues 1–29 (MTMD…TVQA) and 94–113 (SEDS…RREI). The KID domain maps to 8-146 (DNQQSGDAAV…IEEEKSEEET (139 aa)). The span at 20 to 29 (AESQQMTVQA) shows a compositional bias: polar residues. At S119 the chain carries Phosphoserine; by CaMK1, CaMK2, CaMK4, PKB/AKT1 or PKB/AKT2, RPS6KA3, RPS6KA4, RPS6KA5 and SGK1. K122 is covalently cross-linked (Glycyl lysine isopeptide (Lys-Gly) (interchain with G-Cter in SUMO2)). The interval 126–149 (DLSSDAPGVPRIEEEKSEEETSAP) is disordered. S128 carries the post-translational modification Phosphoserine; by CaMK2. S257 carries the post-translational modification Phosphoserine; by HIPK2. The 59-residue stretch at 269-327 (ARKREVRLMKNREAARECRRKKKEYVKCLENRVAVLENQNKTLIEELKALKDLYCHKSD) folds into the bZIP domain. Positions 270–295 (RKREVRLMKNREAARECRRKKKEYVK) are basic motif. Glycyl lysine isopeptide (Lys-Gly) (interchain with G-Cter in SUMO1) cross-links involve residues K271 and K290. A leucine-zipper region spans residues 297–318 (LENRVAVLENQNKTLIEELKAL).

The protein belongs to the bZIP family. As to quaternary structure, interacts with PPRC1. Binds DNA as a dimer. This dimer is stabilized by magnesium ions. Interacts, through the bZIP domain, with the coactivators CRTC1/TORC1, CRTC2/TORC2 and CRTC3/TORC3. When phosphorylated on Ser-119, binds CREBBP. Interacts with CREBL2; regulates CREB1 phosphorylation, stability and transcriptional activity. Interacts (phosphorylated form) with TOX3. Interacts with ARRB1. Binds to HIPK2. Interacts with SGK1. Interacts with TSSK4; this interaction facilitates phosphorylation on Ser-119. Forms a complex with KMT2A and CREBBP. Interacts with TOX4; CREB1 is required for full induction of TOX4-dependent activity and the interaction is increased by cAMP and inhibited by insulin. In terms of processing, phosphorylation of Ser-119 allows CREBBP binding. Stimulated by phosphorylation. Phosphorylation of both Ser-128 and Ser-119 in the SCN regulates the activity of CREB and participate in circadian rhythm generation. Phosphorylated upon calcium influx by CaMK4 and CaMK2 on Ser-119. CaMK4 is much more potent than CaMK2 in activating CREB. Phosphorylated by CaMK2 on Ser-128. Phosphorylation of Ser-128 blocks CREB-mediated transcription even when Ser-119 is phosphorylated. Phosphorylated by CaMK1. Phosphorylation of Ser-257 by HIPK2 in response to genotoxic stress promotes CREB1 activity, facilitating the recruitment of the coactivator CBP. Phosphorylated at Ser-119 by RPS6KA3, RPS6KA4 and RPS6KA5 in response to mitogenic or stress stimuli. CREBL2 positively regulates phosphorylation at Ser-119 thereby stimulating CREB1 transcriptional activity. In liver, phosphorylation is induced by fasting or glucagon in a circadian fashion. Phosphorylated by TSSK4 on Ser-119. Sumoylated with SUMO1. Sumoylation on Lys-290, but not on Lys-271, is required for nuclear localization of this protein. Sumoylation is enhanced under hypoxia, promoting nuclear localization and stabilization.

It is found in the nucleus. Its function is as follows. Phosphorylation-dependent transcription factor that stimulates transcription upon binding to the DNA cAMP response element (CRE), a sequence present in many viral and cellular promoters. Transcription activation is enhanced by the TORC coactivators which act independently of Ser-119 phosphorylation. Involved in different cellular processes including the synchronization of circadian rhythmicity and the differentiation of adipose cells. Regulates the expression of apoptotic and inflammatory response factors in cardiomyocytes in response to ERFE-mediated activation of AKT signaling. In Rattus norvegicus (Rat), this protein is Cyclic AMP-responsive element-binding protein 1 (Creb1).